Reading from the N-terminus, the 447-residue chain is Argininosuccinate synthase (447 aa).

Residues 20-28 (AFSGGLDTS) and Ala46 each bind ATP. Tyr102 contacts L-citrulline. 2 residues coordinate ATP: Gly132 and Thr134. Residues Thr134, Asn138, and Asp139 each contribute to the L-aspartate site. Asn138 serves as a coordination point for L-citrulline. An ATP-binding site is contributed by Asp139. L-citrulline is bound by residues Arg142 and Ser195. Asp197 is an ATP binding site. 3 residues coordinate L-citrulline: Thr204, Glu206, and Glu283.

The protein belongs to the argininosuccinate synthase family. Type 2 subfamily. As to quaternary structure, homotetramer.

It is found in the cytoplasm. The catalysed reaction is L-citrulline + L-aspartate + ATP = 2-(N(omega)-L-arginino)succinate + AMP + diphosphate + H(+). The protein operates within amino-acid biosynthesis; L-arginine biosynthesis; L-arginine from L-ornithine and carbamoyl phosphate: step 2/3. The protein is Argininosuccinate synthase of Neisseria gonorrhoeae (strain ATCC 700825 / FA 1090).